A 101-amino-acid chain; its full sequence is Small ribosomal subunit protein uS14 (101 aa).

The protein belongs to the universal ribosomal protein uS14 family. Part of the 30S ribosomal subunit. Contacts proteins S3 and S10.

Binds 16S rRNA, required for the assembly of 30S particles and may also be responsible for determining the conformation of the 16S rRNA at the A site. The chain is Small ribosomal subunit protein uS14 from Sphingopyxis alaskensis (strain DSM 13593 / LMG 18877 / RB2256) (Sphingomonas alaskensis).